We begin with the raw amino-acid sequence, 477 residues long: Beta-agarase D (477 aa).

Residues 1 to 20 (MKRSILLAIIAFLQFFTSYG) form the signal peptide. The region spanning 22–378 (YDWDNVPIPA…WIRVYKPVNA (357 aa)) is the GH16 domain. Residues 94-104 (MQNHVAVSGGN), 123-125 (NNT), glutamate 174, glutamate 179, arginine 206, and glutamate 340 each bind substrate. The Nucleophile role is filled by glutamate 174. Glutamate 179 functions as the Proton donor in the catalytic mechanism. Over residues 382–391 (NSAETTSTVE) the composition is skewed to low complexity. Residues 382 to 402 (NSAETTSTVEKPASFEPQGQP) are disordered.

This sequence belongs to the glycosyl hydrolase 16 family.

It is found in the secreted. The catalysed reaction is Hydrolysis of (1-&gt;4)-beta-D-galactosidic linkages in agarose, giving the tetramer as the predominant product.. In terms of biological role, cleaves the beta-1,4-linkages between beta-D-galactose and alpha-L-3,6-anhydro-galactose residues in agarose. Cleaves agarose in a random manner with retention of the anomeric-bond configuration, producing beta-anomers that give rise progressively to alpha-anomers when mutarotation takes place. Requires at least 4 consecutive agarose units and is highly intolerant to modifications. This Zobellia galactanivorans (strain DSM 12802 / CCUG 47099 / CIP 106680 / NCIMB 13871 / Dsij) protein is Beta-agarase D (agaD).